We begin with the raw amino-acid sequence, 188 residues long: ATP synthase subunit delta (188 aa).

This sequence belongs to the ATPase delta chain family. F-type ATPases have 2 components, F(1) - the catalytic core - and F(0) - the membrane proton channel. F(1) has five subunits: alpha(3), beta(3), gamma(1), delta(1), epsilon(1). F(0) has three main subunits: a(1), b(2) and c(10-14). The alpha and beta chains form an alternating ring which encloses part of the gamma chain. F(1) is attached to F(0) by a central stalk formed by the gamma and epsilon chains, while a peripheral stalk is formed by the delta and b chains.

It localises to the cell inner membrane. F(1)F(0) ATP synthase produces ATP from ADP in the presence of a proton or sodium gradient. F-type ATPases consist of two structural domains, F(1) containing the extramembraneous catalytic core and F(0) containing the membrane proton channel, linked together by a central stalk and a peripheral stalk. During catalysis, ATP synthesis in the catalytic domain of F(1) is coupled via a rotary mechanism of the central stalk subunits to proton translocation. Functionally, this protein is part of the stalk that links CF(0) to CF(1). It either transmits conformational changes from CF(0) to CF(1) or is implicated in proton conduction. This chain is ATP synthase subunit delta, found in Sinorhizobium fredii (strain NBRC 101917 / NGR234).